Reading from the N-terminus, the 76-residue chain is uncharacterized protein (76 aa).

The first 22 residues, 1–22 (MFTKALSVVLLTCALFSGQLMA), serve as a signal peptide directing secretion.

This is an uncharacterized protein from Escherichia coli O157:H7.